The chain runs to 329 residues: GTP 3',8-cyclase (329 aa).

Positions 8–234 (AFARKYYYLR…QLRQRSDGPA (227 aa)) constitute a Radical SAM core domain. Residue Arg-17 participates in GTP binding. 2 residues coordinate [4Fe-4S] cluster: Cys-24 and Cys-28. Residue Tyr-30 participates in S-adenosyl-L-methionine binding. [4Fe-4S] cluster is bound at residue Cys-31. A GTP-binding site is contributed by Arg-68. Position 72 (Gly-72) interacts with S-adenosyl-L-methionine. Thr-99 serves as a coordination point for GTP. Ser-123 is a binding site for S-adenosyl-L-methionine. GTP is bound at residue Lys-160. Met-194 provides a ligand contact to S-adenosyl-L-methionine. [4Fe-4S] cluster-binding residues include Cys-257 and Cys-260. 262–264 (RLR) serves as a coordination point for GTP. Residue Cys-274 participates in [4Fe-4S] cluster binding.

Belongs to the radical SAM superfamily. MoaA family. In terms of assembly, monomer and homodimer. The cofactor is [4Fe-4S] cluster.

It carries out the reaction GTP + AH2 + S-adenosyl-L-methionine = (8S)-3',8-cyclo-7,8-dihydroguanosine 5'-triphosphate + 5'-deoxyadenosine + L-methionine + A + H(+). Its pathway is cofactor biosynthesis; molybdopterin biosynthesis. Its function is as follows. Catalyzes the cyclization of GTP to (8S)-3',8-cyclo-7,8-dihydroguanosine 5'-triphosphate. The polypeptide is GTP 3',8-cyclase (Escherichia coli O17:K52:H18 (strain UMN026 / ExPEC)).